We begin with the raw amino-acid sequence, 61 residues long: DNA-directed RNA polymerase subunit Rpo6 (61 aa).

It belongs to the archaeal Rpo6/eukaryotic RPB6 RNA polymerase subunit family. As to quaternary structure, part of the RNA polymerase complex.

It localises to the cytoplasm. It catalyses the reaction RNA(n) + a ribonucleoside 5'-triphosphate = RNA(n+1) + diphosphate. Its function is as follows. DNA-dependent RNA polymerase (RNAP) catalyzes the transcription of DNA into RNA using the four ribonucleoside triphosphates as substrates. The polypeptide is DNA-directed RNA polymerase subunit Rpo6 (Thermoplasma volcanium (strain ATCC 51530 / DSM 4299 / JCM 9571 / NBRC 15438 / GSS1)).